The following is a 137-amino-acid chain: Holo-[acyl-carrier-protein] synthase (137 aa).

Positions 8 and 61 each coordinate Mg(2+).

Belongs to the P-Pant transferase superfamily. AcpS family. It depends on Mg(2+) as a cofactor.

It is found in the cytoplasm. It catalyses the reaction apo-[ACP] + CoA = holo-[ACP] + adenosine 3',5'-bisphosphate + H(+). Functionally, transfers the 4'-phosphopantetheine moiety from coenzyme A to a Ser of acyl-carrier-protein. This is Holo-[acyl-carrier-protein] synthase from Afipia carboxidovorans (strain ATCC 49405 / DSM 1227 / KCTC 32145 / OM5) (Oligotropha carboxidovorans).